Reading from the N-terminus, the 1343-residue chain is ABC multidrug transporter atrD (1343 aa).

The segment covering 1-10 (MSPLETNPLS) has biased composition (polar residues). Positions 1–67 (MSPLETNPLS…HRPKSSSSNN (67 aa)) are disordered. Low complexity predominate over residues 20 to 31 (ETSTTEEQASTP). An N-linked (GlcNAc...) asparagine glycan is attached at Asn99. A run of 4 helical transmembrane segments spans residues 114-134 (ILIM…LPLF), 163-183 (YFVY…VGFI), 235-255 (KVGL…IAYV), and 263-283 (ICSS…QFII). Residues 115–403 (LIMVISTICA…VSPNAQAFTN (289 aa)) enclose the ABC transmembrane type-1 1 domain. N-linked (GlcNAc...) asparagine glycosylation is present at Asn309. A run of 2 helical transmembrane segments spans residues 339 to 359 (IVMG…YGLG) and 366 to 386 (FLVD…AILI). One can recognise an ABC transporter 1 domain in the interval 438 to 683 (IELRNVKHIY…GGAYRKLVEA (246 aa)). 473–480 (GPSGSGKS) is a binding site for ATP. N-linked (GlcNAc...) asparagine glycosylation is present at Asn545. The next 2 membrane-spanning stretches (helical) occupy residues 773 to 793 (MLIG…QAVL) and 820 to 840 (LMFF…GAAF). The 290-residue stretch at 774-1063 (LIGLVFSVLA…VFSFAPDMGK (290 aa)) folds into the ABC transmembrane type-1 2 domain. Asn872 carries an N-linked (GlcNAc...) asparagine glycan. A run of 4 helical transmembrane segments spans residues 887–907 (HLSG…TTLG), 920–942 (LALV…FYML), 1010–1030 (ALVF…LGHH), and 1037–1057 (FFVC…VFSF). Asn1083 is a glycosylation site (N-linked (GlcNAc...) asparagine). The 239-residue stretch at 1098–1336 (IEFRNVHFRY…KGRYYELVNL (239 aa)) folds into the ABC transporter 2 domain. Position 1133-1140 (1133-1140 (GPSGCGKS)) interacts with ATP.

Belongs to the ABC transporter superfamily. ABCB family. Multidrug resistance exporter (TC 3.A.1.201) subfamily.

Its subcellular location is the cell membrane. Its activity is regulated as follows. Fenamirol efflux transporter activity is inhibited by the cyclosporin derivative PSC 833, nigericin, reserpine and valinomycin. The effect of reserpine is transiant, while that of the cyclosporin derivative PSC 833, nigericin and valinomycin is proportional to the time of exposure. Cyclohexinmide has inhibitory effect only when applied prior to addition of the fungicide. In terms of biological role, pleiotropic ABC efflux transporter involved in the protection of the cells against a wide range of toxic compounds. Confers resistance to the azole fenarimol via efflux transport. May also be involved in the secretion of penicillin. The sequence is that of ABC multidrug transporter atrD from Emericella nidulans (strain FGSC A4 / ATCC 38163 / CBS 112.46 / NRRL 194 / M139) (Aspergillus nidulans).